We begin with the raw amino-acid sequence, 174 residues long: ATP-dependent protease subunit HslV (174 aa).

Thr2 is a catalytic residue. The Na(+) site is built by Gly157, Cys160, and Thr163.

Belongs to the peptidase T1B family. HslV subfamily. A double ring-shaped homohexamer of HslV is capped on each side by a ring-shaped HslU homohexamer. The assembly of the HslU/HslV complex is dependent on binding of ATP.

It is found in the cytoplasm. The catalysed reaction is ATP-dependent cleavage of peptide bonds with broad specificity.. Allosterically activated by HslU binding. Functionally, protease subunit of a proteasome-like degradation complex believed to be a general protein degrading machinery. This Shewanella pealeana (strain ATCC 700345 / ANG-SQ1) protein is ATP-dependent protease subunit HslV.